A 467-amino-acid polypeptide reads, in one-letter code: Probable Xaa-Pro aminopeptidase SMAC_04549 (467 aa).

4 residues coordinate Mn(2+): Asp263, Asp274, Glu397, and Glu437.

The protein belongs to the peptidase M24B family. Mn(2+) is required as a cofactor.

The catalysed reaction is Release of any N-terminal amino acid, including proline, that is linked to proline, even from a dipeptide or tripeptide.. Functionally, catalyzes the removal of a penultimate prolyl residue from the N-termini of peptides. This Sordaria macrospora (strain ATCC MYA-333 / DSM 997 / K(L3346) / K-hell) protein is Probable Xaa-Pro aminopeptidase SMAC_04549.